The sequence spans 508 residues: Histone acetyltransferase type B catalytic subunit (508 aa).

Interaction with histone H4 N-terminus regions lie at residues 44-46 and 207-209; these read EKE and YRY. Acetyl-CoA is bound by residues 249-251 and 256-262; these read FII and QQKGLGS. The active-site Proton donor/acceptor is Glu284. Disordered regions lie at residues 364 to 399 and 461 to 508; these read SVRP…PTPE and QADG…SGHA. Basic and acidic residues predominate over residues 387–399; it reads KGHEKALPKPTPE.

It belongs to the HAT1 family. As to quaternary structure, component of the HAT-B complex composed of at least hat-1 and hat-2. The HAT-B complex binds to histone H4 tail.

It localises to the cytoplasm. Its subcellular location is the nucleus. It carries out the reaction L-lysyl-[protein] + acetyl-CoA = N(6)-acetyl-L-lysyl-[protein] + CoA + H(+). Catalytic component of the histone acetylase B (HAT-B) complex. Acetylates 'Lys-12' of histone H4 which is required for telomeric silencing. Has intrinsic substrate specificity that modifies lysine in recognition sequence GXGKXG. Involved in DNA double-strand break repair. The sequence is that of Histone acetyltransferase type B catalytic subunit (hat-1) from Neurospora crassa (strain ATCC 24698 / 74-OR23-1A / CBS 708.71 / DSM 1257 / FGSC 987).